Consider the following 1380-residue polypeptide: DNA-directed RNA polymerase subunit beta (1380 aa).

It belongs to the RNA polymerase beta chain family. The RNAP catalytic core consists of 2 alpha, 1 beta, 1 beta' and 1 omega subunit. When a sigma factor is associated with the core the holoenzyme is formed, which can initiate transcription.

The enzyme catalyses RNA(n) + a ribonucleoside 5'-triphosphate = RNA(n+1) + diphosphate. Its function is as follows. DNA-dependent RNA polymerase catalyzes the transcription of DNA into RNA using the four ribonucleoside triphosphates as substrates. The chain is DNA-directed RNA polymerase subunit beta from Nitrobacter hamburgensis (strain DSM 10229 / NCIMB 13809 / X14).